The chain runs to 193 residues: Cerebellin-1 (193 aa).

Positions 1–21 (MLGVVELLLLGAAWLAGPARG) are cleaved as a signal peptide. A glycan (N-linked (GlcNAc...) asparagine) is linked at N23. The interval 34–38 (CLVVC) is essential for interaction with NRXN1 and linker of two C1q trimers into disulfide-linked hexamers. A C1q domain is found at 57–193 (SGSAKVAFSA…TFSGFLVFPL (137 aa)). A necessary for interaction with CBLN3, and homotrimerization region spans residues 62–193 (VAFSAIRSTN…TFSGFLVFPL (132 aa)). An N-linked (GlcNAc...) asparagine glycan is attached at N79. Residues 122 to 147 (YNRQTIQVSLMLNGWPVISAFAGDQD) form an essential for interaction with GRID2 region.

As to quaternary structure, homohexamer; disulfide-linked homotrimers. The trimers are assembled via the globular C1q domains. The trimers associate via N-terminal cysteine residues to form disulfide-linked hexamers. May form oligomers with CBLN2, CBLN3 and CBLN4 prior to secretion. Once secreted, does not interact with other CBLN family members. Interacts with GRID1. Interacts with NRXN1 and NRXN2 long (alpha) and short (beta) isoforms produced by alternative promoter usage. Competes with NLGN1 for NRXN1-binding. Weakly interacts with NRXN3 short isoform and not at all with NRXN3 long isoform. Interacts (via C1q domain) with GRID2; GRID2-binding is calcium-independent; CBLN1 hexamers anchor GRID2 N-terminal domain dimers to monomeric NRXN1 isoform beta; promotes synaptogenesis and mediates the D-Serine-dependent long term depression signals and AMPA receptor endocytosis. In terms of processing, the proteolytic processing to yield cerebellin seems to occur either prior to the secretion by presynaptic neurons and subsequent oligomerization or in some other location after release of the mature protein. Post-translationally, sialoglycoprotein.

The protein localises to the secreted. The protein resides in the postsynaptic cell membrane. Functionally, required for synapse integrity and synaptic plasticity. During cerebellar synapse formation, essential for the matching and maintenance of pre- and post-synaptic elements at parallel fiber-Purkinje cell synapses, the establishment of the proper pattern of climbing fiber-Purkinje cell innervation, and induction of long-term depression at parallel fiber-Purkinje cell synapses. Plays a role as a synaptic organizer that acts bidirectionally on both pre- and post-synaptic components. On the one hand induces accumulation of synaptic vesicles in the pre-synaptic part by binding with NRXN1 and in other hand induces clustering of GRID2 and its associated proteins at the post-synaptic site through association of GRID2. NRXN1-CBLN1-GRID2 complex directly induces parallel fiber protrusions that encapsulate spines of Purkinje cells leading to accumulation of GRID2 and synaptic vesicles. Required for CBLN3 export from the endoplasmic reticulum and secretion. NRXN1-CBLN1-GRID2 complex mediates the D-Serine-dependent long term depression signals and AMPA receptor endocytosis. Essential for long-term maintenance but not establishment of excitatory synapses. Inhibits the formation and function of inhibitory GABAergic synapses in cerebellar Purkinje cells. Its function is as follows. The cerebellin peptide exerts neuromodulatory functions. Directly stimulates norepinephrine release via the adenylate cyclase/PKA-dependent signaling pathway; and indirectly enhances adrenocortical secretion in vivo, through a paracrine mechanism involving medullary catecholamine release. This Bos taurus (Bovine) protein is Cerebellin-1.